The sequence spans 48 residues: Large ribosomal subunit protein bL34c (48 aa).

Residues 18–48 (SGFRSRMATPQGRKTIRNRRKKGRKNLTLRR) are disordered. Over residues 31 to 48 (KTIRNRRKKGRKNLTLRR) the composition is skewed to basic residues.

This sequence belongs to the bacterial ribosomal protein bL34 family.

The protein resides in the plastid. Its subcellular location is the chloroplast. The protein is Large ribosomal subunit protein bL34c of Phaeodactylum tricornutum (strain CCAP 1055/1).